The primary structure comprises 347 residues: Hyaluronidase conohyal-ad1 (347 aa).

The first 18 residues, 1–18, serve as a signal peptide directing secretion; that stretch reads MRAVVVVTGLVVVVVTTT. A propeptide spanning residues 19–33 is cleaved from the precursor; the sequence is LSLQDHDVKSASSPL. A disordered region spans residues 27 to 49; the sequence is KSASSPLSSSVDQGSSGDDCDEG. Residues 28-43 show a composition bias toward low complexity; that stretch reads SASSPLSSSVDQGSSG. A disulfide bond links cysteine 67 and cysteine 343. Catalysis depends on glutamate 150, which acts as the Proton donor.

Belongs to the glycosyl hydrolase 56 family. Contains 4 disulfide bonds. In terms of processing, is N-linked glycosylated at three positions. As to expression, expressed by the venom duct.

It localises to the secreted. It catalyses the reaction Random hydrolysis of (1-&gt;4)-linkages between N-acetyl-beta-D-glucosamine and D-glucuronate residues in hyaluronate.. Functionally, hyaluronidase catalyzes the hydrolysis of hyaluronic acid (HA), an anionic, nonsulfated glycosaminoglycan distributed widely throughout connective, epithelial, and neural tissues. In venom, they are known to enhance diffusion of the venom by degrading the extracellular matrix. The protein is Hyaluronidase conohyal-ad1 of Conus adamsonii (Rhododendron cone).